The following is a 3574-amino-acid chain: Chromatin structure-remodeling complex protein SYD (3574 aa).

Disordered regions lie at residues 76–105 (SCLPHPGGTQTEDSGSAHLAGSSQAVGVSN), 123–211 (TSGR…KIDD), and 328–372 (DPKG…TERS). 2 stretches are compositionally biased toward polar residues: residues 124-148 (SGRQLGGSNSASQTFYQGSGTQSNR) and 155-168 (PSNLDSTSGISQPH). A compositionally biased stretch (basic and acidic residues) spans 169 to 181 (NRSETMNQRDVKS). The segment covering 194-204 (WDQNMDNSQIF) has biased composition (polar residues). Positions 358–372 (RLDEMDFSSKETERS) are enriched in basic and acidic residues. An HSA domain is found at 573–647 (QKMKEERQRR…QREKINLLKI (75 aa)). Residues 766-933 (VSLYNNHLNG…WALLNFLLPN (168 aa)) form the Helicase ATP-binding domain. An ATP-binding site is contributed by 779–786 (DEMGLGKT). A DEAH box motif is present at residues 884 to 887 (DEGH). Residues 1077–1223 (MLDRMLPKLK…KLGVANQSIT (147 aa)) enclose the Helicase C-terminal domain. The Nuclear localization signal signature appears at 1266-1273 (ARRESEID). Disordered regions lie at residues 1342 to 1472 (KRKD…VSRT), 1500 to 1575 (HPTS…SDAE), 1588 to 1637 (IVSR…SGSH), 1690 to 1811 (GPVQ…QIEV), 1830 to 1868 (QPHFSQSVAPDIHSSGSLSQEIRRDTSGTGGSARKQTAD), 2040 to 2068 (SSLSYVRSEPTASASTTAEPLPTDKLEKN), 2089 to 2115 (SSEEQTNVNSKIETNSEELQASRTDEV), 2143 to 2162 (SSMLEPDELPNAGQKGHSSI), 2179 to 2220 (LDDK…QMED), 2235 to 2338 (EEKE…DTND), 2350 to 2451 (EEKE…HMED), 2517 to 2538 (FESETHARTDSGGIDRGNEVSE), 2684 to 2703 (SEEIQSPSILPDDVPGQPDD), 2718 to 2759 (IDIG…RDSR), 2865 to 2884 (DTEKSKEPGTESADVSLHQL), 3017 to 3045 (EGTDFSSSLPKTEEENAKSQLADTEPSSS), 3189 to 3208 (NADSQLANIEPSSSPSVVEK), 3316 to 3337 (VDDSTGCSSEPQVQLPPSAEPM), and 3512 to 3574 (TEDT…NEDV). Residues 1362-1371 (AREVRSYEEK) show a composition bias toward basic and acidic residues. 2 stretches are compositionally biased toward polar residues: residues 1399-1426 (SLANDTSNIPVENSSDTLLPTSPTQAIT) and 1500-1511 (HPTSSLALTSPD). Positions 1532–1546 (GRGRGRSRGRGAGRG) are enriched in basic residues. Composition is skewed to polar residues over residues 1555-1571 (GSNSSITQRTETATSLA) and 1597-1614 (EGSTSNPDQVSPVHSATT). A compositionally biased stretch (basic and acidic residues) spans 1617–1627 (RSDKAADKDLD). Composition is skewed to polar residues over residues 1690–1699 (GPVQNQNAVS), 1706–1752 (KSPS…STVE), 1796–1806 (DASSARSTGLT), 1832–1849 (HFSQSVAPDIHSSGSLSQ), 2040–2057 (SSLSYVRSEPTASASTTA), and 2090–2110 (SEEQTNVNSKIETNSEELQAS). A compositionally biased stretch (acidic residues) spans 2248–2260 (DDADTEQDPEESV). Residues 2438 to 2451 (DRPKDGTADTHMED) show a composition bias toward basic and acidic residues. The span at 2718-2735 (IDIGITSGKTCQPSSSTQ) shows a compositional bias: polar residues. 2 stretches are compositionally biased toward polar residues: residues 3034–3045 (KSQLADTEPSSS) and 3191–3204 (DSQLANIEPSSSPS). A compositionally biased stretch (basic and acidic residues) spans 3523–3538 (KTEEKDAENPSDRLDG).

This sequence belongs to the SNF2/RAD54 helicase family. Interacts with LFY. Binds to BARD1/ROW1. Phosphorylated. As to expression, mostly expressed in rapidly dividing cells in the vegetative, inflorescence, and root meristems, as well as in young leaf and flower primordia. Isoform 1 is predominantly found in seedlings whereas isoform 2 is present in both seedlings and inflorescences (at protein level).

It is found in the cytoplasm. Its subcellular location is the nucleus. Its function is as follows. Catalytic component of the chromatin structure-remodeling complex (RSC), which is involved in transcription regulation and nucleosome positioning. Controls stem cell fate via the transcription regulation of WUS in the shoot apical meristem, by modulating its promoter. LFY-dependent repressor of the meristem identity switch from vegetative to reproductive development probably by modulating chromatin state. Involved in the regulation of floral homeotic gene expression in response to environmental stimuli. Required for carpel and ovule development, and for cotyledon separation via the regulation of CUC2 transcription. Regulates the promoters of several genes downstream of the jasmonate (JA) and ethylene (ET) signaling pathways. Required for resistance against the necrotrophic pathogen B.cinerea but not the biotrophic pathogen P.syringae. This Arabidopsis thaliana (Mouse-ear cress) protein is Chromatin structure-remodeling complex protein SYD (SYD).